The following is a 95-amino-acid chain: Integration host factor subunit beta (95 aa).

This sequence belongs to the bacterial histone-like protein family. In terms of assembly, heterodimer of an alpha and a beta chain.

In terms of biological role, this protein is one of the two subunits of integration host factor, a specific DNA-binding protein that functions in genetic recombination as well as in transcriptional and translational control. This Klebsiella pneumoniae subsp. pneumoniae (strain ATCC 700721 / MGH 78578) protein is Integration host factor subunit beta.